The chain runs to 519 residues: Transcription factor STP1 (519 aa).

Positions Ile-16–Lys-35 are i. Positions Ala-47 to Thr-61 are enriched in basic and acidic residues. Disordered stretches follow at residues Ala-47–Ser-69 and Leu-115–Thr-150. The tract at residues Leu-65 to Ser-97 is II. Residues Ser-131 to Pro-146 are compositionally biased toward low complexity. A C2H2-type 1 zinc finger spans residues Phe-160–His-182. A C2H2-type 2; atypical zinc finger spans residues Tyr-188–His-223. The C2H2-type 3; atypical zinc-finger motif lies at Gly-240 to Cys-265. The segment at Ile-357–Val-382 is disordered. Polar residues predominate over residues Val-364–Glu-381.

Interacts (via Region II) with SSY5; protease component of the SPS-sensor. Post-translationally, phosphorylated by casein kinase I. Phosphorylation is not dependent on the extracellular amino acid levels, but is a prerequisite for proteolytic processing. Activated by the amino acid-induced proteolytic removal of an N-terminal inhibitory domain by serine protease SSY5, an intrinsic component of the SPS-sensor. Processing requires at least 2 components of the SCF(GRR1) ubiquitin ligase complex, namely the F-box protein GRR1 and the E2 enzyme CDC34, but does not depend on the proteasome. Processing is negatively regulated by the protein phosphatase 2A regulatory subunit RTS1.

The protein resides in the cell membrane. Its subcellular location is the nucleus. Its function is as follows. Transcription factor involved in the regulation of gene expression in response to extracellular amino acid levels. Synthesized as latent cytoplasmic precursor, which, upon a signal initiated by the plasma membrane SPS (SSY1-PTR3-SSY5) amino acid sensor system, becomes proteolytically activated and relocates to the nucleus, where it induces the expression of SPS-sensor-regulated genes, including the amino-acid permeases AGP1, BAP2, BAP3 and GNP1. Binding to promoters is facilitated by DAL81. Involved in the repression of genes subject to nitrogen catabolite repression and genes involved in stress response. Negatively regulated by inner nuclear membrane proteins ASI1, ASI2 and ASI3, which prevent unprocessed precursor forms that escape cytoplasmic anchoring from inducing SPS-sensor-regulated genes. May be involved in pre-tRNA splicing. This Saccharomyces cerevisiae (strain RM11-1a) (Baker's yeast) protein is Transcription factor STP1 (STP1).